The chain runs to 274 residues: Anamorsin homolog (274 aa).

Residues 1-154 (MDRTRKQCSV…KKPSWKIGSS (154 aa)) form an N-terminal SAM-like domain region. The linker stretch occupies residues 154–185 (SFALKKSTKGSVKVNLDDDLIDEDSLLTEEDM). 4 residues coordinate [2Fe-2S] cluster: Cys196, Cys205, Cys208, and Cys210. The fe-S binding site A stretch occupies residues 196–210 (CEVGSTRKACKNCTC). Positions 235, 238, 246, and 249 each coordinate [4Fe-4S] cluster. 2 consecutive short sequence motifs (cx2C motif) follow at residues 235-238 (CGSC) and 246-249 (CSTC). The fe-S binding site B stretch occupies residues 235-249 (CGSCGLGDAFRCSTC).

The protein belongs to the anamorsin family. Monomer. [2Fe-2S] cluster is required as a cofactor. The cofactor is [4Fe-4S] cluster.

Its subcellular location is the cytoplasm. It is found in the mitochondrion intermembrane space. Component of the cytosolic iron-sulfur (Fe-S) protein assembly (CIA) machinery. Required for the maturation of extramitochondrial Fe-S proteins. Part of an electron transfer chain functioning in an early step of cytosolic Fe-S biogenesis, facilitating the de novo assembly of a [4Fe-4S] cluster on the cytosolic Fe-S scaffold complex. Electrons are transferred from NADPH via a FAD- and FMN-containing diflavin oxidoreductase. Together with the diflavin oxidoreductase, also required for the assembly of the diferric tyrosyl radical cofactor of ribonucleotide reductase (RNR), probably by providing electrons for reduction during radical cofactor maturation in the catalytic small subunit. This is Anamorsin homolog from Ricinus communis (Castor bean).